Here is a 253-residue protein sequence, read N- to C-terminus: uncharacterized protein (253 aa).

It belongs to the methyltransferase superfamily.

This is an uncharacterized protein from Mycobacterium avium (strain 104).